Reading from the N-terminus, the 298-residue chain is GTPase Era (298 aa).

The Era-type G domain occupies H8–E176. Residues G16–S23 form a G1 region. GTP is bound at residue G16 to S23. A G2 region spans residues Q42–H46. A G3 region spans residues D63 to G66. GTP is bound by residues D63–L67 and N125–D128. The tract at residues N125–D128 is G4. Positions I155–A157 are G5. One can recognise a KH type-2 domain in the interval V199–E283.

Belongs to the TRAFAC class TrmE-Era-EngA-EngB-Septin-like GTPase superfamily. Era GTPase family. In terms of assembly, monomer.

It is found in the cytoplasm. It localises to the cell inner membrane. An essential GTPase that binds both GDP and GTP, with rapid nucleotide exchange. Plays a role in 16S rRNA processing and 30S ribosomal subunit biogenesis and possibly also in cell cycle regulation and energy metabolism. This chain is GTPase Era, found in Stenotrophomonas maltophilia (strain K279a).